The chain runs to 344 residues: Heat-inducible transcription repressor HrcA (344 aa).

Belongs to the HrcA family.

Its function is as follows. Negative regulator of class I heat shock genes (grpE-dnaK-dnaJ and groELS operons). Prevents heat-shock induction of these operons. The sequence is that of Heat-inducible transcription repressor HrcA from Streptococcus agalactiae serotype III (strain NEM316).